Here is a 643-residue protein sequence, read N- to C-terminus: MKDYDELLKYYELYETIGTGGFAKVKLACHVLTGEMVAIKIMDKNALGSDLPRVKTEIDALKSLRHQHICQLYHVLETKNKIFMVLEYCPGGELFDYIISQDRLSEEETRVVFRQILSAVAYVHSQGYAHRDLKPENLLFDENHKLKLIDFGLCAKPKGNKDYHLQTCCGSLAYAAPELIQGKSYLGSEADVWSMGILLYVLMCGFLPFDDDNVMALYKKIMRGKYEVPKWLSPSSILLLQQMLQVDPKKRISMRNLLNHPWVMQDYSCPVEWQSKTPLTHLDEDCVTELSVHHRSSRQTMEDLISSWQYDHLTATYLLLLAKKARGKPARLQLLSFSCGTASTTPKSKNLSLEDMSTSDDNCVAGLIDYELCEDKLLAPKTPQVTKHLAESNHAASKSPAPGVRRAVANKLMDKENVCTPKSSVKNEEQFVFSEPKIPVSKNQYKREIPASPTRFPTPAKARAQCLREAPVRTPGNSAGADTLTTGVISPERRCRSMDVDLNQAHMEDTPKKKGTNVFGSLERGLDKVLTALTRNKKKGSARDGPRKRKLHYNVTTTRLVNPDQLLSEIMAILPKKNVDFVQKGYTLKCQTQSDFGKVTMQFELEVCQLQRPDVVGIRRQRLKGDAWVYKRLVEDILSGCKM.

The Protein kinase domain maps to 11 to 263; it reads YELYETIGTG…MRNLLNHPWV (253 aa). ATP-binding positions include 17–25 and Lys-40; that span reads IGTGGFAKV. Thr-56 bears the Phosphothreonine; by autocatalysis mark. Asp-132 acts as the Proton acceptor in catalysis. Tyr-163 is subject to Phosphotyrosine; by autocatalysis. The residue at position 167 (Thr-167) is a Phosphothreonine; by autocatalysis. Phosphoserine; by autocatalysis occurs at positions 171 and 253. Residues 282-321 form a UBA-like region; that stretch reads LDEDCVTELSVHHRSSRQTMEDLISSWQYDHLTATYLLLL. An autoinhibitory region region spans residues 326 to 643; sequence RGKPARLQLL…VEDILSGCKM (318 aa). Phosphoserine; by autocatalysis is present on residues Ser-336 and Ser-343. At Ser-352 the chain carries Phosphoserine. Residues Ser-399 and Ser-423 each carry the phosphoserine; by autocatalysis modification. Thr-486 carries the post-translational modification Phosphothreonine; by autocatalysis. Phosphoserine is present on Ser-490. The residue at position 497 (Ser-497) is a Phosphoserine; by autocatalysis. Position 510 is a phosphothreonine (Thr-510). At Ser-521 the chain carries Phosphoserine; by autocatalysis. Thr-531 is subject to Phosphothreonine; by autocatalysis. Residues 594–643 enclose the KA1 domain; it reads SDFGKVTMQFELEVCQLQRPDVVGIRRQRLKGDAWVYKRLVEDILSGCKM.

It belongs to the protein kinase superfamily. CAMK Ser/Thr protein kinase family. SNF1 subfamily. In terms of assembly, monomer. Interacts with ZNF622 and PPP1R8. Autophosphorylated: autophosphorylation of the T-loop at Thr-167 and Ser-171 is required for activation. In terms of tissue distribution, expressed in testis, ovary, thymus, spleen and T-cell. Expressed by neural progenitors: highly enriched in cultures containing multipotent progenitors.

It localises to the cell membrane. The catalysed reaction is L-tyrosyl-[protein] + ATP = O-phospho-L-tyrosyl-[protein] + ADP + H(+). It carries out the reaction L-seryl-[protein] + ATP = O-phospho-L-seryl-[protein] + ADP + H(+). The enzyme catalyses L-threonyl-[protein] + ATP = O-phospho-L-threonyl-[protein] + ADP + H(+). Activated by autophosphorylation of the T-loop at Thr-167 and Ser-171: in contrast to other members of the SNF1 subfamily, phosphorylation at Thr-167 is not mediated by STK11/LKB1 but via autophosphorylation instead. Inhibited by calcium-binding. Kinase activity is also regulated by reducing agents: dithiothreitol (DTT) or reduced glutathione are required for kinase activity in vitro; such dependence is however not due to the presence of disulfide bonds. Its function is as follows. Serine/threonine-protein kinase involved in various processes such as cell cycle regulation, self-renewal of stem cells, apoptosis and splicing regulation. Has a broad substrate specificity; phosphorylates BCL2L14, CDC25B, MAP3K5/ASK1 and ZNF622. Acts as an activator of apoptosis by phosphorylating and activating MAP3K5/ASK1. Acts as a regulator of cell cycle, notably by mediating phosphorylation of CDC25B, promoting localization of CDC25B to the centrosome and the spindle poles during mitosis. Plays a key role in cell proliferation. Required for proliferation of embryonic and postnatal multipotent neural progenitors. Phosphorylates and inhibits BCL2L14. Also involved in the inhibition of spliceosome assembly during mitosis by phosphorylating ZNF622, thereby contributing to its redirection to the nucleus. May also play a role in primitive hematopoiesis. The sequence is that of Maternal embryonic leucine zipper kinase (Melk) from Mus musculus (Mouse).